Reading from the N-terminus, the 415-residue chain is Queuine tRNA-ribosyltransferase accessory subunit 2 (415 aa).

Zn(2+) is bound by residues cysteine 351, cysteine 353, cysteine 356, and histidine 382.

This sequence belongs to the queuine tRNA-ribosyltransferase family. QTRT2 subfamily. Heterodimer of a catalytic subunit QTRT1 and an accessory subunit QTRT2. The cofactor is Zn(2+).

Its subcellular location is the cytoplasm. It is found in the mitochondrion outer membrane. In terms of biological role, non-catalytic subunit of the queuine tRNA-ribosyltransferase (TGT) that catalyzes the base-exchange of a guanine (G) residue with queuine (Q) at position 34 (anticodon wobble position) in tRNAs with GU(N) anticodons (tRNA-Asp, -Asn, -His and -Tyr), resulting in the hypermodified nucleoside queuosine (7-(((4,5-cis-dihydroxy-2-cyclopenten-1-yl)amino)methyl)-7-deazaguanosine). The polypeptide is Queuine tRNA-ribosyltransferase accessory subunit 2 (Homo sapiens (Human)).